Here is a 353-residue protein sequence, read N- to C-terminus: Probable peptidoglycan glycosyltransferase FtsW (353 aa).

8 helical membrane passes run 26 to 46 (IFYFFLIFLLSFILLRIPMSF), 53 to 73 (LILIISIFLLTIVLLIGKSVH), 115 to 135 (FWGFLKPITIIIIQSVLLLAE), 137 to 157 (DLGTVIVLFLTTLSVLFLSGV), 162 to 182 (FFIIIFFVTLIITALVLFEPY), 242 to 262 (IIGEELGYIGCFLILLMIFFI), 288 to 308 (IGLWFSFQTLINIGAVTGILP), and 314 to 334 (LPLISYGGSSLIVNLMAICIL).

The protein belongs to the SEDS family. FtsW subfamily.

It localises to the cell inner membrane. It carries out the reaction [GlcNAc-(1-&gt;4)-Mur2Ac(oyl-L-Ala-gamma-D-Glu-L-Lys-D-Ala-D-Ala)](n)-di-trans,octa-cis-undecaprenyl diphosphate + beta-D-GlcNAc-(1-&gt;4)-Mur2Ac(oyl-L-Ala-gamma-D-Glu-L-Lys-D-Ala-D-Ala)-di-trans,octa-cis-undecaprenyl diphosphate = [GlcNAc-(1-&gt;4)-Mur2Ac(oyl-L-Ala-gamma-D-Glu-L-Lys-D-Ala-D-Ala)](n+1)-di-trans,octa-cis-undecaprenyl diphosphate + di-trans,octa-cis-undecaprenyl diphosphate + H(+). Its pathway is cell wall biogenesis; peptidoglycan biosynthesis. In terms of biological role, peptidoglycan polymerase that is essential for cell division. The protein is Probable peptidoglycan glycosyltransferase FtsW of Buchnera aphidicola subsp. Schizaphis graminum (strain Sg).